Here is a 124-residue protein sequence, read N- to C-terminus: V-type proton ATPase subunit F 1 (124 aa).

Phosphoserine is present on Ser87.

It belongs to the V-ATPase F subunit family. As to quaternary structure, V-ATPase is a heteromultimeric enzyme made up of two complexes: the ATP-hydrolytic V1 complex and the proton translocation V0 complex. The V1 complex consists of three catalytic AB heterodimers that form a heterohexamer, three peripheral stalks each consisting of EG heterodimers, one central rotor including subunits D and F, and the regulatory subunits C and H. The proton translocation complex V0 consists of the proton transport subunit a, a ring of proteolipid subunits c9c'', rotary subunit d, subunits e and f, and the accessory subunits VhaAC45 and ATP6AP2.

Subunit of the V1 complex of vacuolar(H+)-ATPase (V-ATPase), a multisubunit enzyme composed of a peripheral complex (V1) that hydrolyzes ATP and a membrane integral complex (V0) that translocates protons. V-ATPase is responsible for acidifying and maintaining the pH of intracellular compartments and in some cell types, is targeted to the plasma membrane, where it is responsible for acidifying the extracellular environment. This chain is V-type proton ATPase subunit F 1 (Vha14-1), found in Drosophila melanogaster (Fruit fly).